We begin with the raw amino-acid sequence, 304 residues long: MRFPKIPKRAVAATVGIVATSFTLASCVTNEEQGNPDGWEQIVPDPVPEIQAMVPEALAQRGVLTAGANPPFPPFEFKDSDGQIIGVEMDLVRAMAGVMGLEFSPQEQDFSLILPSVQAGTLDIGASGFTDNEERRENFDFIDFLFAGVQWAQATDRETPIDPENACGLTVAVQRTTVAETDDVRPRSAQCEAEGKEPITILSYETADTAATALILGRADALAADSPVSAWAAERSEGRIEVVGDMYLAAPFGFAFPLESDLTPAAAAAFQHLIDTGDYQRIMAQWGIEEGLLDEALINEQPLN.

Residues 1-26 form the signal peptide; sequence MRFPKIPKRAVAATVGIVATSFTLAS. Cysteine 27 is lipidated: N-palmitoyl cysteine. Residue cysteine 27 is the site of S-diacylglycerol cysteine attachment.

This sequence belongs to the bacterial solute-binding protein 3 family. The complex is probably composed of two ATP-binding proteins (ArgV), two transmembrane proteins (ArgU) and a solute-binding protein (ArgT).

It localises to the cell membrane. Functionally, part of the ABC transporter complex ArgTUV involved in L-arginine import. May also transport L-citrulline. Binds L-arginine and its molecular precursor L-citrulline, but not L-histidine, L-glutamate, L-glutamine, L-lysine or L-cysteine. The polypeptide is Arginine-binding protein ArgT (Corynebacterium glutamicum (strain ATCC 13032 / DSM 20300 / JCM 1318 / BCRC 11384 / CCUG 27702 / LMG 3730 / NBRC 12168 / NCIMB 10025 / NRRL B-2784 / 534)).